The primary structure comprises 962 residues: MASTTVAQLAAELSRSAAALLEQLQAAGVGKATPEDIITESDKTRLLDYLKRSHGQADDSSRKKITLTKRETSEIRQSDGTGKTRTVQVEVRKKRVLIKRDEAAPDAQADAVEAQAPVVDAVEEARRDEEERQQAELLARQEAEAKAAREAAEREEAERRARQEALEAEQRRQAELAARKAEEEAAASRAVTEANEDSSRKKAEDEKARVTAERAEAQKAADEAKAAADKARAEQEVAARKRREAAEAEARAIQQMLNAPPRVLKAPSERKAEEKKAEQTGTLHKPVKPAGATTEAKKDEKKPATTTTTTATADKKGKVVKAGWQDDSSRKKGSGLKTRGDTSGGVGGWRGGPRGRGGRQQQHDDSRSSFQAPTEPVVREVHVPETVSVADLAHKMAVKASEVIKQMMKLGQMVTINQVLDQETAMIVVEEMGHKAYAAKLDDPEALLVVGGEEHTDAELLPRPPVVTVMGHVDHGKTSLLDYIRRTKVAAGEAGGITQHIGAYHVETDRGVITFLDTPGHEAFTAMRARGAKATDIVILVVAADDGVMPQTKEAIAHAKAAGVPIVVAINKIDKPDANPDRVKQELVAEQVVPEEYGGDSPFVPVSAKMGTGVEDLLEQVLLQAEVLELTAPVDAPAKGLVVEAQLDKGKGPIATILVSSGTLKRGDVVLAGSAYGRVRAMLDENGKPTKEAGPSIPVEIQGLSEVPAAGEEVLVLPDERKAREIALFRQGKFRDVKLAKQQAAKLENMLEQMAEGEVQTLPLIVKADVQGSQEALVQSLQKLSTAEVRVQIVHGGVGGISESDVNLATASKAVIIGFNVRADAGARKLAEHNGIDIRYYNIIYDAVDEIKAAMSGMLAPEKRETTIGQVEVRQVFRVPKIGAVAGCMVTDGLVKRNSLVRVLRNNVVIHDGELDSLKRFKDDVKEVKQGFECGLSIKNFNDVQEGDQLEVYEITEVARTL.

A compositionally biased stretch (basic and acidic residues) spans Arg52–Gln77. Disordered stretches follow at residues Arg52–Val87 and Ala121–Val378. Residues Ser78 to Val87 are compositionally biased toward polar residues. Basic and acidic residues-rich tracts occupy residues Glu123–Glu183, Asp197–Ala250, and Pro267–Glu278. Gly residues predominate over residues Thr342–Gly355. Positions Pro462–Thr631 constitute a tr-type G domain. The tract at residues Gly471–Thr478 is G1. Residue Gly471–Thr478 coordinates GTP. Positions Gly496 to His500 are G2. Residues Asp517 to Gly520 form a G3 region. GTP-binding positions include Asp517–His521 and Asn571–Asp574. The G4 stretch occupies residues Asn571–Asp574. The tract at residues Ser607–Lys609 is G5.

The protein belongs to the TRAFAC class translation factor GTPase superfamily. Classic translation factor GTPase family. IF-2 subfamily.

It is found in the cytoplasm. Functionally, one of the essential components for the initiation of protein synthesis. Protects formylmethionyl-tRNA from spontaneous hydrolysis and promotes its binding to the 30S ribosomal subunits. Also involved in the hydrolysis of GTP during the formation of the 70S ribosomal complex. This is Translation initiation factor IF-2 from Cupriavidus necator (strain ATCC 17699 / DSM 428 / KCTC 22496 / NCIMB 10442 / H16 / Stanier 337) (Ralstonia eutropha).